The sequence spans 133 residues: Small ribosomal subunit protein uS8 (133 aa).

Belongs to the universal ribosomal protein uS8 family. As to quaternary structure, part of the 30S ribosomal subunit. Contacts proteins S5 and S12.

In terms of biological role, one of the primary rRNA binding proteins, it binds directly to 16S rRNA central domain where it helps coordinate assembly of the platform of the 30S subunit. The protein is Small ribosomal subunit protein uS8 of Anaplasma phagocytophilum (strain HZ).